A 193-amino-acid chain; its full sequence is 3-isopropylmalate dehydratase small subunit (193 aa).

Belongs to the LeuD family. LeuD type 1 subfamily. Heterodimer of LeuC and LeuD.

The enzyme catalyses (2R,3S)-3-isopropylmalate = (2S)-2-isopropylmalate. The protein operates within amino-acid biosynthesis; L-leucine biosynthesis; L-leucine from 3-methyl-2-oxobutanoate: step 2/4. In terms of biological role, catalyzes the isomerization between 2-isopropylmalate and 3-isopropylmalate, via the formation of 2-isopropylmaleate. The polypeptide is 3-isopropylmalate dehydratase small subunit (Bacillus cereus (strain 03BB102)).